We begin with the raw amino-acid sequence, 151 residues long: Snaclec 3 (151 aa).

Positions 1 to 23 (MGRLVFVSFSLLVVFLSLSGTAA) are cleaved as a signal peptide. 3 disulfide bridges follow: Cys-25/Cys-36, Cys-53/Cys-149, and Cys-125/Cys-141. The C-type lectin domain occupies 32–150 (YEGHCYKPFN…CGEINPFVCK (119 aa)).

The protein belongs to the snaclec family. Heterodimer; disulfide-linked. As to expression, expressed by the venom gland.

The protein resides in the secreted. In terms of biological role, interferes with one step of hemostasis (modulation of platelet aggregation, or coagulation cascade, for example). This chain is Snaclec 3, found in Sistrurus catenatus edwardsii (Desert massasauga).